Reading from the N-terminus, the 276-residue chain is NH(3)-dependent NAD(+) synthetase (276 aa).

Residue Gly43–Ser50 participates in ATP binding. Mg(2+) is bound at residue Asp49. Arg146 contacts deamido-NAD(+). Thr166 contacts ATP. Glu171 is a Mg(2+) binding site. Deamido-NAD(+) is bound by residues Lys179 and Asp186. The ATP site is built by Lys195 and Thr217. His266–Lys267 lines the deamido-NAD(+) pocket.

The protein belongs to the NAD synthetase family. In terms of assembly, homodimer.

It carries out the reaction deamido-NAD(+) + NH4(+) + ATP = AMP + diphosphate + NAD(+) + H(+). Its pathway is cofactor biosynthesis; NAD(+) biosynthesis; NAD(+) from deamido-NAD(+) (ammonia route): step 1/1. Functionally, catalyzes the ATP-dependent amidation of deamido-NAD to form NAD. Uses ammonia as a nitrogen source. In Shewanella halifaxensis (strain HAW-EB4), this protein is NH(3)-dependent NAD(+) synthetase.